Reading from the N-terminus, the 269-residue chain is 4-hydroxy-tetrahydrodipicolinate reductase (269 aa).

Residues 10-15 (GANGRM), E36, 99-101 (GTT), and 123-126 (AANF) contribute to the NAD(+) site. H156 serves as the catalytic Proton donor/acceptor. A (S)-2,3,4,5-tetrahydrodipicolinate-binding site is contributed by H157. The active-site Proton donor is the K160. Position 166 to 167 (166 to 167 (GT)) interacts with (S)-2,3,4,5-tetrahydrodipicolinate.

This sequence belongs to the DapB family.

It is found in the cytoplasm. It carries out the reaction (S)-2,3,4,5-tetrahydrodipicolinate + NAD(+) + H2O = (2S,4S)-4-hydroxy-2,3,4,5-tetrahydrodipicolinate + NADH + H(+). The enzyme catalyses (S)-2,3,4,5-tetrahydrodipicolinate + NADP(+) + H2O = (2S,4S)-4-hydroxy-2,3,4,5-tetrahydrodipicolinate + NADPH + H(+). It participates in amino-acid biosynthesis; L-lysine biosynthesis via DAP pathway; (S)-tetrahydrodipicolinate from L-aspartate: step 4/4. In terms of biological role, catalyzes the conversion of 4-hydroxy-tetrahydrodipicolinate (HTPA) to tetrahydrodipicolinate. The polypeptide is 4-hydroxy-tetrahydrodipicolinate reductase (Neisseria meningitidis serogroup A / serotype 4A (strain DSM 15465 / Z2491)).